Here is a 248-residue protein sequence, read N- to C-terminus: PF03932 family protein CutC (248 aa).

This sequence belongs to the CutC family.

It is found in the cytoplasm. In Photorhabdus laumondii subsp. laumondii (strain DSM 15139 / CIP 105565 / TT01) (Photorhabdus luminescens subsp. laumondii), this protein is PF03932 family protein CutC.